The following is a 76-amino-acid chain: uncharacterized protein (76 aa).

A helical transmembrane segment spans residues 53–70; that stretch reads STKLHIIWFCIFAIFIAV.

It is found in the membrane. This is an uncharacterized protein from Haemophilus influenzae (strain ATCC 51907 / DSM 11121 / KW20 / Rd).